A 301-amino-acid polypeptide reads, in one-letter code: Possible hemolysin C (301 aa).

CBS domains follow at residues 80–142 and 145–202; these read MVPR…NGRL and LIRK…IDDE.

It belongs to the UPF0053 family. Hemolysin C subfamily.

This chain is Possible hemolysin C (tlyC), found in Rickettsia akari (strain Hartford).